A 414-amino-acid chain; its full sequence is MLMLSKTAGAIPRPPRSNVRGFIRRFNVQPRALFHHKLVLGIETSCDDTAAAVVDETGNVLGEALHSQTEVHLKTGGIVPPVAQQLHRENIQRIVEEALSASGVSPSDLSAIATTIKPGLALSLGVGLSFSVQLVNQFKKPFIPIHHMEAHALTIRLTHKVGFPFLVLLISGGHCLLALVQSVSDFLLLGKSLDIAPGDMLDKVARRLSLIKHPECSTMSGGKAIEHLAKEGNRFHFTINPPMQNAKNCDFSFTGLQHVTDKLITHKEKEEGIEKGQILSSAADIAAAVQHATACHLAKRTHRAILFCQQKNLLSPANAVLVVSGGVASNLYIRRALEIVANATQCTLLCPPPRLCTDNGIMIAWNGIERLRAGLGILHDVEDIRYEPKCPLGIDISREVAEAAIKVPRLKMTL.

A mitochondrion-targeting transit peptide spans M1–Q29. N6-acetyllysine occurs at positions 74 and 140. Residues H147 and H151 each contribute to the a divalent metal cation site. Substrate is bound by residues L169–G173 and D202. At K203 the chain carries N6-acetyllysine. G222 and E226 together coordinate substrate. 2 positions are modified to N6-acetyllysine: K230 and K299. Residues S329–N330 and T357 each bind substrate. Position 358 (D358) interacts with a divalent metal cation.

It belongs to the KAE1 / TsaD family. Monomer. It depends on a divalent metal cation as a cofactor.

It is found in the mitochondrion. The enzyme catalyses L-threonylcarbamoyladenylate + adenosine(37) in tRNA = N(6)-L-threonylcarbamoyladenosine(37) in tRNA + AMP + H(+). Functionally, required for the formation of a threonylcarbamoyl group on adenosine at position 37 (t(6)A37) in mitochondrial tRNAs that read codons beginning with adenine. Probably involved in the transfer of the threonylcarbamoyl moiety of threonylcarbamoyl-AMP (TC-AMP) to the N6 group of A37. Involved in mitochondrial genome maintenance. The protein is tRNA N6-adenosine threonylcarbamoyltransferase, mitochondrial of Rattus norvegicus (Rat).